The primary structure comprises 316 residues: CD-NTase-associated protein 12 (316 aa).

Positions 4–121 (RIFIGSSSEG…MLGITQTRYE (118 aa)) constitute a TIR domain. Positions 161–316 (STVIAISYFE…ECVEIIEPQP (156 aa)) are STING domain. 3 residues coordinate 3',3'-c-di-GMP: Phe-172, Pro-237, and Asp-253.

The protein in the C-terminal section; belongs to the bacterial STING family. Forms homodimers; in the presence of c-di-GMP forms filaments with an ordered array of parallel-stacked subunits.

It catalyses the reaction NAD(+) + H2O = ADP-D-ribose + nicotinamide + H(+). NAD(+) hydrolase activity is strongly stimulated by c-di-GMP, weakly by 3'3'-cGAMP, very weakly by c-di-AMP but not at all by 2'3'-cGAMP. Self-association of TIR domains is required for NADase activity. Functionally, effector protein of a CBASS antiviral system with NAD(+) hydrolase activity. CBASS (cyclic oligonucleotide-based antiphage signaling system) provides immunity against bacteriophage. The CD-NTase protein synthesizes cyclic nucleotides in response to infection; these serve as specific second messenger signals. The signals activate a diverse range of effectors, leading to bacterial cell death and thus abortive phage infection. A type I-D(GG) CBASS system. In terms of biological role, binds c-di-GMP (synthesized by the cognate CdnE encoded upstream in the same operon) but not c-di-AMP, 2'-3'-cGAMP, 3'-3'-cGAMP or cUMP-AMP (tested without the N-terminal TIR domain). Upon activation by c-di-GMP forms filaments which hydrolyze NAD(+); filament formation is required for enzyme activation. This chain is CD-NTase-associated protein 12, found in Lachnospiraceae bacterium (strain RUG226).